A 425-amino-acid polypeptide reads, in one-letter code: Elongation factor 1-alpha (425 aa).

In terms of domain architecture, tr-type G spans 5–221 (KPHMNLAVIG…NALSEPEKPT (217 aa)). Positions 14–21 (GHIDHGKS) are G1. A GTP-binding site is contributed by 14-21 (GHIDHGKS). Mg(2+) is bound at residue S21. A G2 region spans residues 70–74 (GITID). The G3 stretch occupies residues 91-94 (DCPG). GTP contacts are provided by residues 91–95 (DCPGH) and 146–149 (NKMD). The tract at residues 146–149 (NKMD) is G4. A G5 region spans residues 185–187 (SAF).

It belongs to the TRAFAC class translation factor GTPase superfamily. Classic translation factor GTPase family. EF-Tu/EF-1A subfamily.

Its subcellular location is the cytoplasm. It catalyses the reaction GTP + H2O = GDP + phosphate + H(+). In terms of biological role, GTP hydrolase that promotes the GTP-dependent binding of aminoacyl-tRNA to the A-site of ribosomes during protein biosynthesis. The protein is Elongation factor 1-alpha of Methanoculleus marisnigri (strain ATCC 35101 / DSM 1498 / JR1).